The following is a 150-amino-acid chain: Seminal ribonuclease (150 aa).

A signal peptide spans 1 to 26; sequence MALKSLVVLPLLVLVLLLVRVQPSLG. 2 residues coordinate substrate: Lys33 and Arg36. The active-site Proton acceptor is His38. 4 disulfide bridges follow: Cys52-Cys110, Cys66-Cys121, Cys84-Cys136, and Cys91-Cys98. Residues 67–71 and Lys92 each bind substrate; that span reads KPVNT. Asn93 carries the deamidated asparagine; by deterioration modification. Arg111 provides a ligand contact to substrate. The active-site Proton donor is His145.

The protein belongs to the pancreatic ribonuclease family. Homodimer; disulfide-linked. As to expression, seminal plasma. Can reach 3% of the protein content of this fluid.

It localises to the secreted. The enzyme catalyses an [RNA] containing cytidine + H2O = an [RNA]-3'-cytidine-3'-phosphate + a 5'-hydroxy-ribonucleotide-3'-[RNA].. The catalysed reaction is an [RNA] containing uridine + H2O = an [RNA]-3'-uridine-3'-phosphate + a 5'-hydroxy-ribonucleotide-3'-[RNA].. Its activity is regulated as follows. Allosteric regulation by both substrate and reaction products. Its function is as follows. This enzyme hydrolyzes both single- and double-stranded RNA. This Bos taurus (Bovine) protein is Seminal ribonuclease (SRN).